The primary structure comprises 344 residues: Phosphate acyltransferase (344 aa).

Belongs to the PlsX family. As to quaternary structure, homodimer. Probably interacts with PlsY.

Its subcellular location is the cytoplasm. The catalysed reaction is a fatty acyl-[ACP] + phosphate = an acyl phosphate + holo-[ACP]. The protein operates within lipid metabolism; phospholipid metabolism. Its function is as follows. Catalyzes the reversible formation of acyl-phosphate (acyl-PO(4)) from acyl-[acyl-carrier-protein] (acyl-ACP). This enzyme utilizes acyl-ACP as fatty acyl donor, but not acyl-CoA. This is Phosphate acyltransferase from Paracidovorax citrulli (strain AAC00-1) (Acidovorax citrulli).